A 353-amino-acid chain; its full sequence is Photosystem II D2 protein (353 aa).

At Thr-2 the chain carries N-acetylthreonine. A Phosphothreonine modification is found at Thr-2. The chain crosses the membrane as a helical span at residues 41–61 (CAYFALGGWFTGTTFVTSWYT). His-118 serves as a coordination point for chlorophyll a. The chain crosses the membrane as a helical span at residues 125–141 (GFMLRQFELARSVQLRP). Residues Gln-130 and Asn-143 each contribute to the pheophytin a site. Residues 153–166 (VFVSVFLIYPLGQS) traverse the membrane as a helical segment. His-198 lines the chlorophyll a pocket. A helical membrane pass occupies residues 208–228 (AALLCAIHGATVENTLFEDGD). Residues His-215 and Phe-262 each coordinate a plastoquinone. His-215 lines the Fe cation pocket. Fe cation is bound at residue His-269. The chain crosses the membrane as a helical span at residues 279–295 (GLWMSALGVVGLALNLR).

It belongs to the reaction center PufL/M/PsbA/D family. In terms of assembly, PSII is composed of 1 copy each of membrane proteins PsbA, PsbB, PsbC, PsbD, PsbE, PsbF, PsbH, PsbI, PsbJ, PsbK, PsbL, PsbM, PsbT, PsbX, PsbY, PsbZ, Psb30/Ycf12, at least 3 peripheral proteins of the oxygen-evolving complex and a large number of cofactors. It forms dimeric complexes. The D1/D2 heterodimer binds P680, chlorophylls that are the primary electron donor of PSII, and subsequent electron acceptors. It shares a non-heme iron and each subunit binds pheophytin, quinone, additional chlorophylls, carotenoids and lipids. There is also a Cl(-1) ion associated with D1 and D2, which is required for oxygen evolution. The PSII complex binds additional chlorophylls, carotenoids and specific lipids. serves as cofactor.

It localises to the plastid. The protein localises to the chloroplast thylakoid membrane. The catalysed reaction is 2 a plastoquinone + 4 hnu + 2 H2O = 2 a plastoquinol + O2. Photosystem II (PSII) is a light-driven water:plastoquinone oxidoreductase that uses light energy to abstract electrons from H(2)O, generating O(2) and a proton gradient subsequently used for ATP formation. It consists of a core antenna complex that captures photons, and an electron transfer chain that converts photonic excitation into a charge separation. The D1/D2 (PsbA/PsbD) reaction center heterodimer binds P680, the primary electron donor of PSII as well as several subsequent electron acceptors. D2 is needed for assembly of a stable PSII complex. This is Photosystem II D2 protein from Nuphar advena (Common spatterdock).